Reading from the N-terminus, the 839-residue chain is Autophagy-related protein 9A (839 aa).

The interval 1–20 is disordered; the sequence is MAQFDTEYQRLEASYSDSPP. A2 bears the N-acetylalanine mark. Topologically, residues 2-61 are cytoplasmic; that stretch reads AQFDTEYQRLEASYSDSPPGEEDLLVHVAEGSKSPWHHIENLDLFFSRVYNLHQKNGFTC. Residues 8-11 carry the Tyrosine-based sorting signal motif; sequence YQRL. Phosphoserine is present on residues S14, S16, and S18. The chain crosses the membrane as a helical span at residues 62–84; it reads MLIGEIFELMQFLFVVAFTTFLV. At 85-128 the chain is on the lumenal side; the sequence is SCVDYDILFANKMVNHSLHPTEPVKVTLPDAFLPAQVCSARIQE. N99 carries an N-linked (GlcNAc...) asparagine glycan. A helical transmembrane segment spans residues 129–154; it reads NGSLITILVIAGVFWIHRLIKFIYNI. The Cytoplasmic segment spans residues 155-290; it reads CCYWEIHSFY…ELAQRLSNRI (136 aa). The stretch at 291–301 is an intramembrane region; the sequence is LWIGIANFLLC. At 302–319 the chain is on the cytoplasmic side; it reads PLILIWQILYAFFSYAEV. The stretch at 320–328 is an intramembrane region; the sequence is LKREPGALG. Topologically, residues 329-371 are cytoplasmic; the sequence is ARCWSLYGRCYLRHFNELEHELQSRLNRGYKPASKYMNCFLSP. A helical membrane pass occupies residues 372–397; it reads LLTLLAKNGAFFAGSILAVLIALTIY. Residues 398-406 are Lumenal-facing; sequence DEDVLAVEH. The helical transmembrane segment at 407 to 424 threads the bilayer; the sequence is VLTTVTLLGVTVTVCRSF. Over 425–470 the chain is Cytoplasmic; that stretch reads IPDQHMVFCPEQLLRVILAHIHYMPDHWQGNAHRSQTRDEFAQLFQ. The stretch at 471–480 is an intramembrane region; it reads YKAVFILEEL. The Cytoplasmic portion of the chain corresponds to 481-483; that stretch reads LSP. An intramembrane segment occupies 484-492; that stretch reads IVTPLILIF. Residues 493-839 are Cytoplasmic-facing; it reads CLRPRALEII…DELPPQVHKV (347 aa). Phosphoserine is present on residues S656, S735, S738, S741, and S828. Disordered regions lie at residues 656 to 686 and 717 to 839; these read SPLQ…SSGS and HKQQ…VHKV. Basic and acidic residues predominate over residues 724-736; the sequence is EPERHVWHRRESD. Composition is skewed to acidic residues over residues 737 to 747 and 823 to 832; these read ESGESAPDEGG and VPEEGSEDEL.

This sequence belongs to the ATG9 family. In terms of assembly, homotrimer; forms a homotrimer with a central pore that forms a path between the two membrane leaflets. Interacts (via cytoplasmic its C-terminus) with ATG2A. Interacts with SUPT20H. Interacts (via the tyrosine-based sorting signal motif) with AP4M1; promoting association with the AP-4 complex. Interacts with ARFIP1 and ARFIP2. Interacts with PI4K2A and PI4KB. Interacts with ATG4A; the interaction is direct and promotes ATG9A trafficking. Ufmylated in a DDRGK1 dependent manner.

The protein localises to the preautophagosomal structure membrane. It localises to the cytoplasmic vesicle. The protein resides in the autophagosome membrane. Its subcellular location is the golgi apparatus. It is found in the trans-Golgi network membrane. The protein localises to the late endosome membrane. It localises to the recycling endosome membrane. The protein resides in the endoplasmic reticulum membrane. Its subcellular location is the mitochondrion membrane. The enzyme catalyses a 1,2-diacyl-sn-glycero-3-phosphocholine(in) = a 1,2-diacyl-sn-glycero-3-phosphocholine(out). The catalysed reaction is a 1,2-diacyl-sn-glycero-3-phospho-L-serine(in) = a 1,2-diacyl-sn-glycero-3-phospho-L-serine(out). It carries out the reaction a 1,2-diacyl-sn-glycero-3-phosphoethanolamine(in) = a 1,2-diacyl-sn-glycero-3-phosphoethanolamine(out). Phospholipid scramblase involved in autophagy by mediating autophagosomal membrane expansion. Cycles between the preautophagosomal structure/phagophore assembly site (PAS) and the cytoplasmic vesicle pool and supplies membrane for the growing autophagosome. Lipid scramblase activity plays a key role in preautophagosomal structure/phagophore assembly by distributing the phospholipids that arrive through ATG2 (ATG2A or ATG2B) from the cytoplasmic to the luminal leaflet of the bilayer, thereby driving autophagosomal membrane expansion. Also required to supply phosphatidylinositol 4-phosphate to the autophagosome initiation site by recruiting the phosphatidylinositol 4-kinase beta (PI4KB) in a process dependent on ARFIP2, but not ARFIP1. In addition to autophagy, also plays a role in necrotic cell death. The protein is Autophagy-related protein 9A of Homo sapiens (Human).